A 368-amino-acid polypeptide reads, in one-letter code: Aspartate-semialdehyde dehydrogenase (368 aa).

NADP(+)-binding positions include 10–13 (RGMV), 37–38 (TS), and Q72. R101 is a phosphate binding site. Residue C134 is the Acyl-thioester intermediate of the active site. NADP(+) contacts are provided by residues 160–161 (SG) and P191. E239 is a binding site for substrate. K242 contributes to the phosphate binding site. A substrate-binding site is contributed by R266. Residue H273 is the Proton acceptor of the active site. Position 349 (Q349) interacts with NADP(+).

It belongs to the aspartate-semialdehyde dehydrogenase family. Homodimer.

It catalyses the reaction L-aspartate 4-semialdehyde + phosphate + NADP(+) = 4-phospho-L-aspartate + NADPH + H(+). Its pathway is amino-acid biosynthesis; L-lysine biosynthesis via DAP pathway; (S)-tetrahydrodipicolinate from L-aspartate: step 2/4. It functions in the pathway amino-acid biosynthesis; L-methionine biosynthesis via de novo pathway; L-homoserine from L-aspartate: step 2/3. It participates in amino-acid biosynthesis; L-threonine biosynthesis; L-threonine from L-aspartate: step 2/5. In terms of biological role, catalyzes the NADPH-dependent formation of L-aspartate-semialdehyde (L-ASA) by the reductive dephosphorylation of L-aspartyl-4-phosphate. The chain is Aspartate-semialdehyde dehydrogenase from Azotobacter vinelandii.